Consider the following 361-residue polypeptide: MSKFSFTIHSHYKKARSGVITTAHGEIRTPAFMPVGTRGAVKAMLTEAVVETGADILLGNTYHLMLQPSAERIAYLGGLHKFMNWDKPILTDSGGFQVMSLSKLCKITEEGVSFRSHINGNKYMLTPEYSTEIQYLLGSTITMALDECTPYPSTFEKAKTSMHLTTRWANRSRDAFVKREGYAQFGIIQGSVYKELREQSVKDLVKCDFEGYAIGGLAVGEGQELMFRVLDYVPDFLPQNKPRYLMGVGKPSDIIGAVSRGIDMFDCVIPTRSGRNGQAFTKYGTVNIRNSKYADDKEPLEHDCKCPACTNYTKAYLHHLVRIREILGPMLMTWHNLTYFQNLMSRIRTYIKLGKDFDFVH.

The active-site Proton acceptor is aspartate 92. Substrate is bound by residues 92-96 (DSGGF), aspartate 146, glutamine 189, and glycine 216. The RNA binding stretch occupies residues 247–253 (GVGKPSD). Catalysis depends on aspartate 266, which acts as the Nucleophile. Residues 271–275 (TRSGR) are RNA binding; important for wobble base 34 recognition. Zn(2+) is bound by residues cysteine 304, cysteine 306, cysteine 309, and histidine 335.

This sequence belongs to the queuine tRNA-ribosyltransferase family. In terms of assembly, homodimer. Within each dimer, one monomer is responsible for RNA recognition and catalysis, while the other monomer binds to the replacement base PreQ1. Requires Zn(2+) as cofactor.

It carries out the reaction 7-aminomethyl-7-carbaguanine + guanosine(34) in tRNA = 7-aminomethyl-7-carbaguanosine(34) in tRNA + guanine. The protein operates within tRNA modification; tRNA-queuosine biosynthesis. Catalyzes the base-exchange of a guanine (G) residue with the queuine precursor 7-aminomethyl-7-deazaguanine (PreQ1) at position 34 (anticodon wobble position) in tRNAs with GU(N) anticodons (tRNA-Asp, -Asn, -His and -Tyr). Catalysis occurs through a double-displacement mechanism. The nucleophile active site attacks the C1' of nucleotide 34 to detach the guanine base from the RNA, forming a covalent enzyme-RNA intermediate. The proton acceptor active site deprotonates the incoming PreQ1, allowing a nucleophilic attack on the C1' of the ribose to form the product. After dissociation, two additional enzymatic reactions on the tRNA convert PreQ1 to queuine (Q), resulting in the hypermodified nucleoside queuosine (7-(((4,5-cis-dihydroxy-2-cyclopenten-1-yl)amino)methyl)-7-deazaguanosine). The polypeptide is Queuine tRNA-ribosyltransferase (Rickettsia prowazekii (strain Madrid E)).